A 707-amino-acid chain; its full sequence is DNA ligase (707 aa).

Residues 48–52 (DAEYD), 97–98 (SI), and Glu-134 each bind NAD(+). Lys-136 (N6-AMP-lysine intermediate) is an active-site residue. Residues Arg-157, Glu-193, Lys-320, and Lys-344 each contribute to the NAD(+) site. The Zn(2+) site is built by Cys-438, Cys-441, Cys-456, and Cys-462. The BRCT domain maps to 621-707 (VAPKPLSGKT…DSPPDERIPA (87 aa)).

The protein belongs to the NAD-dependent DNA ligase family. LigA subfamily. Mg(2+) is required as a cofactor. It depends on Mn(2+) as a cofactor.

The catalysed reaction is NAD(+) + (deoxyribonucleotide)n-3'-hydroxyl + 5'-phospho-(deoxyribonucleotide)m = (deoxyribonucleotide)n+m + AMP + beta-nicotinamide D-nucleotide.. DNA ligase that catalyzes the formation of phosphodiester linkages between 5'-phosphoryl and 3'-hydroxyl groups in double-stranded DNA using NAD as a coenzyme and as the energy source for the reaction. It is essential for DNA replication and repair of damaged DNA. The protein is DNA ligase of Polaromonas naphthalenivorans (strain CJ2).